The chain runs to 406 residues: O-glycosyltransferase PaGT (406 aa).

Residues 1-26 (MSPPSQIKPPQGTTPVPPSELDPRSD) form a disordered region.

Belongs to the afumC glycosyltransferase family.

The protein operates within mycotoxin biosynthesis. Functionally, O-glycosyltransferase; part of the 2 gene clusters that mediate the biosynthesis of fusicoccins, diterpene glucosides that display phytohormone-like activity and function as potent activators of plasma membrane H(+)-ATPases in plants by modifying 14-3-3 proteins and cause the plant disease constriction canker. The first step in the pathway is performed by the fusicoccadiene synthase PaFS that possesses both prenyl transferase and terpene cyclase activity, converting isopentenyl diphosphate and dimethylallyl diphosphate into geranylgeranyl diphosphate (GGDP) and successively converting GGDP into fusicocca-2,10(14)-diene, a precursor for fusicoccin H. The second step is the oxidation at the C-8 position by the cytochrome P450 monooxygenase PaP450-2 to yield fusicocca-2,10(14)-diene-8-beta-ol. The cytochrome P450 monooxygenase PaP450-1 then catalyzes the hydroxylation at the C-16 position to produce fusicocca-2,10(14)-diene-8-beta,16-diol. The dioxygenase fc-dox then catalyzes the 16-oxydation of fusicocca-2,10(14)-diene-8-beta,16-diol to yield an aldehyde (8-beta-hydroxyfusicocca-1,10(14)-dien-16-al). The short-chain dehydrogenase/reductase fc-sdr catalyzes the reduction of the aldehyde to yield fusicocca-1,10(14)-diene-8-beta,16-diol. The next step is the hydroxylation at C-9 performed by the cytochrome P450 monooxygenase PaP450-3 that leads to fusicoccin H aglycon which is glycosylated to fusicoccin H by the O-glycosyltransferase PaGT. Hydroxylation at C-12 by the cytochrome P450 monooxygenase PaP450-4 leads then to the production of fusicoccin Q and is followed by methylation by the O-methyltransferase PaMT to yield fusicoccin P. Fusicoccin P is further converted to fusicoccin J via prenylation by the O-glucose prenyltransferase PaPT. Cytochrome P450 monooxygenase PaP450-5 then performs hydroxylation at C-19 to yield dideacetyl-fusicoccin A which is acetylated to 3'-O-deacetyl-fusicoccin A by the O-acetyltransferase PaAT-2. Finally, a another acetylation by the O-acetyltransferase PaAT-1 yields fusicoccin A. This Phomopsis amygdali (Fusicoccum amygdali) protein is O-glycosyltransferase PaGT.